A 374-amino-acid chain; its full sequence is Multicilin (374 aa).

The stretch at 164 to 212 forms a coiled coil; sequence EQYWRDVADHNQKALGDALVENNQLQVSLTEKQEEIVSLKEKNIQLNEL. The segment at 230 to 260 is disordered; that stretch reads RTKQNSGATQGRLPVKRSLEDFYPQSNEPDS. Residues 330-374 are TIRT domain; the sequence is TDLEDVSFRTSIKEHSTIRTLAFPQGNAFTIRTSGGGYKFRWVPN.

It belongs to the geminin family. In terms of assembly, component of the EDM complex, at least composed of e2f4, e2f5, mcidas and tfdp1. As to expression, expressed in multiciliate differentiating cells. Expression is lost by stage 26, when multiciliate cells in the skin are fully differentiated, but is then detected in the developing nephrostomes of the kidneys where multiciliate cells form at later stages.

Its subcellular location is the nucleus. Functionally, transcription regulator specifically required for multiciliate cell differentiation. Acts in a multiprotein complex containing E2F4 and E2F5 that binds and activates genes required for centriole biogenesis. Activates genes required for centriole assembly (plk4, cep152) and genes specifically required for motile cilia formation (foxj1). Also promotes the deuterosome pathway of centriole biogenesis by activating expression of ccdc67/deup1, but not its paralog cep63. This Xenopus laevis (African clawed frog) protein is Multicilin (mcidas).